Reading from the N-terminus, the 234-residue chain is Staphylococcal superantigen-like 5 (234 aa).

The signal sequence occupies residues 1–30 (MKMTAIAKASLALGILATGTITSLHQTVNA).

Belongs to the staphylococcal/streptococcal toxin family. As to quaternary structure, interacts with host SELPLG; this interaction prevents SELPLG-mediated neutrophil rolling. Interacts with host MMP9 (via sialic acid-containing O-glycans); this interaction inhibits MMP9 activity. Interacts with host GP1BA and GP6; these interactions play an important role in platelet binding and activation.

Its function is as follows. Secreted protein that plays a role in the inhibition of host innate immune system. Modulates the interaction between host SELPLG and P-selectin thereby preventing initial rolling of neutrophils toward the site of infection. Interferes with leukocyte trafficking by inhibiting host metalloproteinase-9/MMP9 activity. Also associates with two different platelet surface receptors GP1A and GP6 leading to platelet activation and aggregation. This is Staphylococcal superantigen-like 5 from Staphylococcus aureus (strain NCTC 8325 / PS 47).